The primary structure comprises 106 residues: Large ribosomal subunit protein P1 (106 aa).

Residues 66-76 (AQPQATQAQPA) are compositionally biased toward low complexity. A disordered region spans residues 66-106 (AQPQATQAQPAAEEKKEEKKEEEKKGPSEEEIASGLASLFG). The segment covering 77 to 93 (AEEKKEEKKEEEKKGPS) has biased composition (basic and acidic residues).

This sequence belongs to the eukaryotic ribosomal protein P1/P2 family. Part of the 50S ribosomal subunit. Homodimer, it forms part of the ribosomal stalk which helps the ribosome interact with GTP-bound translation factors. Forms a heptameric uL10/P0(P1)2(P1)2(P1)2 complex, where uL10/P0 forms an elongated spine to which the P1 dimers bind in a sequential fashion.

Forms part of the ribosomal stalk, playing a central role in the interaction of the ribosome with GTP-bound translation factors. The polypeptide is Large ribosomal subunit protein P1 (Saccharolobus solfataricus (strain ATCC 35092 / DSM 1617 / JCM 11322 / P2) (Sulfolobus solfataricus)).